A 383-amino-acid polypeptide reads, in one-letter code: 8-amino-7-oxononanoate synthase (383 aa).

Arg-23 lines the substrate pocket. 110–111 provides a ligand contact to pyridoxal 5'-phosphate; the sequence is GF. His-135 provides a ligand contact to substrate. 3 residues coordinate pyridoxal 5'-phosphate: Ser-181, His-209, and Thr-235. Lys-238 is modified (N6-(pyridoxal phosphate)lysine). Position 351 (Thr-351) interacts with substrate.

Belongs to the class-II pyridoxal-phosphate-dependent aminotransferase family. BioF subfamily. As to quaternary structure, homodimer. Requires pyridoxal 5'-phosphate as cofactor.

The catalysed reaction is 6-carboxyhexanoyl-[ACP] + L-alanine + H(+) = (8S)-8-amino-7-oxononanoate + holo-[ACP] + CO2. The protein operates within cofactor biosynthesis; biotin biosynthesis. Its function is as follows. Catalyzes the decarboxylative condensation of pimeloyl-[acyl-carrier protein] and L-alanine to produce 8-amino-7-oxononanoate (AON), [acyl-carrier protein], and carbon dioxide. This chain is 8-amino-7-oxononanoate synthase, found in Aliivibrio fischeri (strain MJ11) (Vibrio fischeri).